Reading from the N-terminus, the 226-residue chain is UPF0758 protein SPD_0975 (226 aa).

Residues 103 to 225 (SILSSQKLAK…YFSYREKTDL (123 aa)) enclose the MPN domain. Residues His-174, His-176, and Asp-187 each coordinate Zn(2+). The short motif at 174 to 187 (HNHPSGAVAPSQND) is the JAMM motif element.

Belongs to the UPF0758 family.

The sequence is that of UPF0758 protein SPD_0975 from Streptococcus pneumoniae serotype 2 (strain D39 / NCTC 7466).